The sequence spans 204 residues: MTKYTFKPKDFKAFNVEGLDARMEALNEYIRPQLHELGEYFSDFFTSQTGETFYPHVAKHARRSVNPPKDTWVAFATNKRGYKMLPHFQIGMFEDQLFVMFGIMHEAKDKATRAKVFERKFKAIQQLPDDYRVCLDHMKPDKPFIKDLTDDDLKEAIQRAINVKKGEFFIARAITPQDKRLKSDKAFIAFLEETFDQFLPFYSA.

Belongs to the UPF0637 family.

This chain is UPF0637 protein SAB0972c, found in Staphylococcus aureus (strain bovine RF122 / ET3-1).